We begin with the raw amino-acid sequence, 273 residues long: Diadenylate cyclase (273 aa).

3 helical membrane-spanning segments follow: residues 12–32 (LANI…IMLI), 37–57 (AVQL…SGFF), and 61–81 (TVEW…IIIF). The DAC domain occupies 82 to 242 (QPELRRALET…GGELFRDVSE (161 aa)).

The protein belongs to the adenylate cyclase family. DacA/CdaA subfamily. Probably a homodimer.

The protein localises to the cell membrane. The enzyme catalyses 2 ATP = 3',3'-c-di-AMP + 2 diphosphate. Catalyzes the condensation of 2 ATP molecules into cyclic di-AMP (c-di-AMP), a signaling compound secreted into the host's cytosol where it triggers the cytosolic surveillance pathway (CSP), a host pathway of innate immunity characterized by expression of beta interferon (IFN-beta) and coregulated genes. Overexpression increases export of c-di-AMP. c-di-AMP is a second messenger that mediates growth, cell wall stability and virulence. In Listeria monocytogenes serotype 1/2a (strain 10403S), this protein is Diadenylate cyclase.